Consider the following 530-residue polypeptide: Ubiquitin carboxyl-terminal hydrolase 17-like protein 5 (530 aa).

One can recognise a USP domain in the interval 80 to 375 (AGLQNMGNTC…QAYVLFYIQK (296 aa)). Cys-89 (nucleophile) is an active-site residue. The Proton acceptor role is filled by His-334. 2 stretches are compositionally biased toward basic and acidic residues: residues 382–392 (SESVSRGREPR) and 398–412 (DTDR…KRDH). 2 disordered regions span residues 382 to 412 (SESV…KRDH) and 477 to 530 (NHHP…LVCQ). Polar residues predominate over residues 493–505 (TPTHQESMNTGTL). The segment covering 510–524 (GRARRSKGKNKHSKR) has biased composition (basic residues).

Belongs to the peptidase C19 family. USP17 subfamily.

It localises to the nucleus. It is found in the endoplasmic reticulum. The catalysed reaction is Thiol-dependent hydrolysis of ester, thioester, amide, peptide and isopeptide bonds formed by the C-terminal Gly of ubiquitin (a 76-residue protein attached to proteins as an intracellular targeting signal).. Deubiquitinating enzyme that removes conjugated ubiquitin from specific proteins to regulate different cellular processes that may include cell proliferation, progression through the cell cycle, apoptosis, cell migration, and the cellular response to viral infection. This is Ubiquitin carboxyl-terminal hydrolase 17-like protein 5 (USP17L5) from Homo sapiens (Human).